The following is a 160-amino-acid chain: Ribosomal RNA large subunit methyltransferase H (160 aa).

S-adenosyl-L-methionine contacts are provided by residues leucine 77, glycine 109, and 128–133 (FSRMTF).

It belongs to the RNA methyltransferase RlmH family. Homodimer.

The protein localises to the cytoplasm. It catalyses the reaction pseudouridine(1915) in 23S rRNA + S-adenosyl-L-methionine = N(3)-methylpseudouridine(1915) in 23S rRNA + S-adenosyl-L-homocysteine + H(+). In terms of biological role, specifically methylates the pseudouridine at position 1915 (m3Psi1915) in 23S rRNA. The sequence is that of Ribosomal RNA large subunit methyltransferase H from Pelotomaculum thermopropionicum (strain DSM 13744 / JCM 10971 / SI).